The following is a 429-amino-acid chain: Glutamyl-tRNA reductase (429 aa).

Residues Thr50 to Arg53, Ser110, Glu115 to Gln117, and Gln121 each bind substrate. The active-site Nucleophile is Cys51. An NADP(+)-binding site is contributed by Gly190–Ala195.

It belongs to the glutamyl-tRNA reductase family. Homodimer.

The enzyme catalyses (S)-4-amino-5-oxopentanoate + tRNA(Glu) + NADP(+) = L-glutamyl-tRNA(Glu) + NADPH + H(+). The protein operates within porphyrin-containing compound metabolism; protoporphyrin-IX biosynthesis; 5-aminolevulinate from L-glutamyl-tRNA(Glu): step 1/2. Functionally, catalyzes the NADPH-dependent reduction of glutamyl-tRNA(Glu) to glutamate 1-semialdehyde (GSA). In Campylobacter hominis (strain ATCC BAA-381 / DSM 21671 / CCUG 45161 / LMG 19568 / NCTC 13146 / CH001A), this protein is Glutamyl-tRNA reductase.